Consider the following 348-residue polypeptide: uncharacterized protein (348 aa).

This sequence belongs to the Mu gp47/PBSX XkdT family.

This is an uncharacterized protein from Bacillus subtilis (strain 168).